The following is a 309-amino-acid chain: Probable lipid kinase YegS-like (309 aa).

The DAGKc domain maps to Met-1–His-134. ATP is bound by residues Thr-39, Gly-65–Glu-71, and Thr-96. The Mg(2+) site is built by Leu-219, Asp-222, and Leu-224. Glu-280 functions as the Proton acceptor in the catalytic mechanism.

The protein belongs to the diacylglycerol/lipid kinase family. YegS lipid kinase subfamily. Requires Mg(2+) as cofactor. The cofactor is Ca(2+).

Its subcellular location is the cytoplasm. Its function is as follows. Probably phosphorylates lipids; the in vivo substrate is unknown. The chain is Probable lipid kinase YegS-like from Xanthomonas euvesicatoria pv. vesicatoria (strain 85-10) (Xanthomonas campestris pv. vesicatoria).